The primary structure comprises 155 residues: MSLVKLANTCAHLQNCSKVRVALTSIPYTKLQLQFAYNLYQQGFLSSLQKGSTMGPDKDFVEVTPDNISTRRLWVGLKYRDNKPVLSSCKLISKPNSRIHLPMEDMKKLCSGVTIRNIKPLQPGELILVRAHNNIMDINEAISKKLDGEVLCRVK.

This sequence belongs to the universal ribosomal protein uS8 family. Component of the mitochondrial small ribosomal subunit (mt-SSU). Mature yeast 74S mitochondrial ribosomes consist of a small (37S) and a large (54S) subunit. The 37S small subunit contains a 15S ribosomal RNA (15S mt-rRNA) and 34 different proteins. The 54S large subunit contains a 21S rRNA (21S mt-rRNA) and 46 different proteins.

It is found in the mitochondrion. Functionally, component of the mitochondrial ribosome (mitoribosome), a dedicated translation machinery responsible for the synthesis of mitochondrial genome-encoded proteins, including at least some of the essential transmembrane subunits of the mitochondrial respiratory chain. The mitoribosomes are attached to the mitochondrial inner membrane and translation products are cotranslationally integrated into the membrane. The polypeptide is Small ribosomal subunit protein uS8m (MRPS8) (Saccharomyces cerevisiae (strain ATCC 204508 / S288c) (Baker's yeast)).